Consider the following 190-residue polypeptide: Acyl-acyl carrier protein thioesterase ATL3, chloroplastic (190 aa).

The N-terminal 49 residues, 1–49 (MFLQVTGTATPAMPAVVFLNSWRRPLSIPLRSVKTFKPLAFFDLKGGKG), are a transit peptide targeting the chloroplast. Aspartate 66 is a catalytic residue.

It belongs to the 4-hydroxybenzoyl-CoA thioesterase family. Highly expressed in stems and flowers and at lower levels in rosette leaves, cauline leaves and siliques.

The protein resides in the plastid. Its subcellular location is the chloroplast. Functionally, acyl-ACP thioesterase involved in the production of fatty acids and beta-keto fatty acids. Can produce fatty acids of long chain (14:1 and 16:1) and beta-keto fatty acids of medium to long chain (8:0, 10:0, 12:0, 12:1, 14:0 and 16:0) when expressed in a heterologous organism (E.coli). Possesses thioesterase activity for lauroyl-ACP (12:0-ACP) in vitro. May play a role in the generation of long fatty acids in the chloroplast. This Arabidopsis thaliana (Mouse-ear cress) protein is Acyl-acyl carrier protein thioesterase ATL3, chloroplastic.